We begin with the raw amino-acid sequence, 191 residues long: MPKIKMIVGLGNIGKEYQDTRHNVGEWFIAKIAQDNNQSFSSNTKLNCNLAKVSIDYNNVVLVFPTTYMNNSGLAVSKVANFYKIAPAEILVAHDELDIDSGEIRLKKGGGHGGHNGLRSINQHLGTNDYLRLRIGIGHPGHKSKVANYVLSNPSIAQKKDIDSAIDNGICFLDDIINYKLEPVMQKLHTK.

Y17 contributes to the tRNA binding site. The active-site Proton acceptor is H22. Y68, N70, and N116 together coordinate tRNA.

It belongs to the PTH family. Monomer.

The protein localises to the cytoplasm. It catalyses the reaction an N-acyl-L-alpha-aminoacyl-tRNA + H2O = an N-acyl-L-amino acid + a tRNA + H(+). Hydrolyzes ribosome-free peptidyl-tRNAs (with 1 or more amino acids incorporated), which drop off the ribosome during protein synthesis, or as a result of ribosome stalling. In terms of biological role, catalyzes the release of premature peptidyl moieties from peptidyl-tRNA molecules trapped in stalled 50S ribosomal subunits, and thus maintains levels of free tRNAs and 50S ribosomes. The chain is Peptidyl-tRNA hydrolase from Francisella tularensis subsp. holarctica (strain FTNF002-00 / FTA).